A 397-amino-acid chain; its full sequence is Elongation factor Tu (397 aa).

The tr-type G domain maps to 10 to 207 (KPHVNVGTIG…TLDTYIPEPV (198 aa)). The interval 19 to 26 (GHVDHGKT) is G1. GTP is bound at residue 19-26 (GHVDHGKT). Thr-26 is a binding site for Mg(2+). Residues 60 to 64 (GITIN) are G2. Residues 81–84 (DCPG) form a G3 region. Residues 81 to 85 (DCPGH) and 136 to 139 (NKAD) each bind GTP. A G4 region spans residues 136 to 139 (NKAD). The G5 stretch occupies residues 174–176 (SAL).

Belongs to the TRAFAC class translation factor GTPase superfamily. Classic translation factor GTPase family. EF-Tu/EF-1A subfamily. Monomer.

The protein resides in the cytoplasm. The catalysed reaction is GTP + H2O = GDP + phosphate + H(+). Its function is as follows. GTP hydrolase that promotes the GTP-dependent binding of aminoacyl-tRNA to the A-site of ribosomes during protein biosynthesis. In Ectopseudomonas mendocina (strain ymp) (Pseudomonas mendocina), this protein is Elongation factor Tu.